The primary structure comprises 191 residues: Thymidylate kinase (191 aa).

Residue 7 to 14 (GVDGAGKS) coordinates ATP.

It belongs to the thymidylate kinase family.

It carries out the reaction dTMP + ATP = dTDP + ADP. Functionally, phosphorylation of dTMP to form dTDP in both de novo and salvage pathways of dTTP synthesis. The sequence is that of Thymidylate kinase from Helicobacter pylori (strain Shi470).